A 501-amino-acid chain; its full sequence is Lysine--tRNA ligase (501 aa).

Mg(2+) contacts are provided by E410 and E417.

It belongs to the class-II aminoacyl-tRNA synthetase family. In terms of assembly, homodimer. It depends on Mg(2+) as a cofactor.

It localises to the cytoplasm. The enzyme catalyses tRNA(Lys) + L-lysine + ATP = L-lysyl-tRNA(Lys) + AMP + diphosphate. The sequence is that of Lysine--tRNA ligase from Shewanella halifaxensis (strain HAW-EB4).